Here is a 356-residue protein sequence, read N- to C-terminus: 3-dehydroquinate synthase (356 aa).

NAD(+) is bound by residues Asp-69–Lys-74, Gly-103–Asp-107, Thr-127–Thr-128, Lys-140, and Lys-149. Residues Glu-182, His-245, and His-262 each coordinate Zn(2+).

The protein belongs to the sugar phosphate cyclases superfamily. Dehydroquinate synthase family. Co(2+) serves as cofactor. It depends on Zn(2+) as a cofactor. The cofactor is NAD(+).

The protein localises to the cytoplasm. It catalyses the reaction 7-phospho-2-dehydro-3-deoxy-D-arabino-heptonate = 3-dehydroquinate + phosphate. Its pathway is metabolic intermediate biosynthesis; chorismate biosynthesis; chorismate from D-erythrose 4-phosphate and phosphoenolpyruvate: step 2/7. Catalyzes the conversion of 3-deoxy-D-arabino-heptulosonate 7-phosphate (DAHP) to dehydroquinate (DHQ). This is 3-dehydroquinate synthase from Pseudoalteromonas translucida (strain TAC 125).